The sequence spans 287 residues: Syntaxin-11 (287 aa).

The stretch at 41 to 71 (LESLYRVIQDIQDENQLLLIDVRRLGRQNVR) forms a coiled coil. The region spanning 204–266 (LNEIESRHRE…GEAKAQVRKA (63 aa)) is the t-SNARE coiled-coil homology domain.

It belongs to the syntaxin family. As to quaternary structure, interacts with the SNARE proteins SNAP-23 and VAMP.

It is found in the membrane. Its subcellular location is the golgi apparatus. The protein resides in the trans-Golgi network membrane. SNARE that acts to regulate protein transport between late endosomes and the trans-Golgi network. The protein is Syntaxin-11 (Stx11) of Mus musculus (Mouse).